A 178-amino-acid polypeptide reads, in one-letter code: Large ribosomal subunit protein uL13m (178 aa).

S2 carries the N-acetylserine modification.

Belongs to the universal ribosomal protein uL13 family. As to quaternary structure, component of the mitochondrial large ribosomal subunit (mt-LSU). Mature mammalian 55S mitochondrial ribosomes consist of a small (28S) and a large (39S) subunit. The 28S small subunit contains a 12S ribosomal RNA (12S mt-rRNA) and 30 different proteins. The 39S large subunit contains a 16S rRNA (16S mt-rRNA), a copy of mitochondrial valine transfer RNA (mt-tRNA(Val)), which plays an integral structural role, and 52 different proteins. Interacts with OXA1L.

The protein resides in the mitochondrion. The protein is Large ribosomal subunit protein uL13m (MRPL13) of Homo sapiens (Human).